Reading from the N-terminus, the 248-residue chain is Pyridoxine 5'-phosphate synthase (248 aa).

Residue Asn12 participates in 3-amino-2-oxopropyl phosphate binding. A 1-deoxy-D-xylulose 5-phosphate-binding site is contributed by 14 to 15 (DH). Residue Arg23 participates in 3-amino-2-oxopropyl phosphate binding. His48 (proton acceptor) is an active-site residue. 1-deoxy-D-xylulose 5-phosphate contacts are provided by Arg50 and His55. Glu75 serves as the catalytic Proton acceptor. Position 105 (Thr105) interacts with 1-deoxy-D-xylulose 5-phosphate. His196 functions as the Proton donor in the catalytic mechanism. Residues Gly197 and 218-219 (GH) contribute to the 3-amino-2-oxopropyl phosphate site.

The protein belongs to the PNP synthase family. As to quaternary structure, homooctamer; tetramer of dimers.

Its subcellular location is the cytoplasm. It catalyses the reaction 3-amino-2-oxopropyl phosphate + 1-deoxy-D-xylulose 5-phosphate = pyridoxine 5'-phosphate + phosphate + 2 H2O + H(+). It functions in the pathway cofactor biosynthesis; pyridoxine 5'-phosphate biosynthesis; pyridoxine 5'-phosphate from D-erythrose 4-phosphate: step 5/5. Its function is as follows. Catalyzes the complicated ring closure reaction between the two acyclic compounds 1-deoxy-D-xylulose-5-phosphate (DXP) and 3-amino-2-oxopropyl phosphate (1-amino-acetone-3-phosphate or AAP) to form pyridoxine 5'-phosphate (PNP) and inorganic phosphate. The sequence is that of Pyridoxine 5'-phosphate synthase from Pseudomonas paraeruginosa (strain DSM 24068 / PA7) (Pseudomonas aeruginosa (strain PA7)).